The chain runs to 106 residues: Small ribosomal subunit protein uS10 (106 aa).

Belongs to the universal ribosomal protein uS10 family. In terms of assembly, part of the 30S ribosomal subunit.

Functionally, involved in the binding of tRNA to the ribosomes. The protein is Small ribosomal subunit protein uS10 of Prochlorococcus marinus subsp. pastoris (strain CCMP1986 / NIES-2087 / MED4).